The chain runs to 160 residues: MADDNNSNGAANPTLSILAQYTKDLSFENPGAPRSLQARDKAPTININVNVNANPLSDTDFDVVLSLNAEAKDGDKTVFHAELTYGGVFRVAGFPQEHMLPVLFIECPRMLFPFARQIIADVTRNGGFPPLMIDPIDFTQMFAQRVAEEQARAKVQAVPN.

This sequence belongs to the SecB family. In terms of assembly, homotetramer, a dimer of dimers. One homotetramer interacts with 1 SecA dimer.

It localises to the cytoplasm. In terms of biological role, one of the proteins required for the normal export of preproteins out of the cell cytoplasm. It is a molecular chaperone that binds to a subset of precursor proteins, maintaining them in a translocation-competent state. It also specifically binds to its receptor SecA. This is Protein-export protein SecB from Rhizobium johnstonii (strain DSM 114642 / LMG 32736 / 3841) (Rhizobium leguminosarum bv. viciae).